A 756-amino-acid chain; its full sequence is 5-methyltetrahydropteroyltriglutamate--homocysteine methyltransferase (756 aa).

5-methyltetrahydropteroyltri-L-glutamate contacts are provided by residues 15-18 and K111; that span reads REWK. The disordered stretch occupies residues 392–411; it reads GAATSHNLENKKRPQSFNER. Residues 399-411 are compositionally biased toward basic and acidic residues; the sequence is LENKKRPQSFNER. L-homocysteine is bound by residues 429–431 and E482; that span reads IGS. L-methionine-binding positions include 429–431 and E482; that span reads IGS. Residues 513–514 and W559 contribute to the 5-methyltetrahydropteroyltri-L-glutamate site; that span reads RC. Residue D597 participates in L-homocysteine binding. L-methionine is bound at residue D597. E603 contributes to the 5-methyltetrahydropteroyltri-L-glutamate binding site. Zn(2+) contacts are provided by H639, C641, and E663. H692 functions as the Proton donor in the catalytic mechanism. C724 is a Zn(2+) binding site.

Belongs to the vitamin-B12 independent methionine synthase family. The cofactor is Zn(2+).

The catalysed reaction is 5-methyltetrahydropteroyltri-L-glutamate + L-homocysteine = tetrahydropteroyltri-L-glutamate + L-methionine. It participates in amino-acid biosynthesis; L-methionine biosynthesis via de novo pathway; L-methionine from L-homocysteine (MetE route): step 1/1. Its function is as follows. Catalyzes the transfer of a methyl group from 5-methyltetrahydrofolate to homocysteine resulting in methionine formation. The polypeptide is 5-methyltetrahydropteroyltriglutamate--homocysteine methyltransferase (Halalkalibacterium halodurans (strain ATCC BAA-125 / DSM 18197 / FERM 7344 / JCM 9153 / C-125) (Bacillus halodurans)).